Consider the following 260-residue polypeptide: Putative ABC transporter ATP-binding protein SCO3161 (260 aa).

One can recognise an ABC transporter domain in the interval 16-246; it reads LDVSGLAFAY…DDLMRAHRLE (231 aa). An ATP-binding site is contributed by 49-56; sequence GPNGAGKT.

Belongs to the ABC transporter superfamily.

The protein localises to the cell membrane. Its function is as follows. Probably part of an ABC transporter complex. Responsible for energy coupling to the transport system. This chain is Putative ABC transporter ATP-binding protein SCO3161, found in Streptomyces coelicolor (strain ATCC BAA-471 / A3(2) / M145).